A 142-amino-acid polypeptide reads, in one-letter code: Large ribosomal subunit protein uL16 (142 aa).

The protein belongs to the universal ribosomal protein uL16 family. As to quaternary structure, part of the 50S ribosomal subunit.

In terms of biological role, binds 23S rRNA and is also seen to make contacts with the A and possibly P site tRNAs. The protein is Large ribosomal subunit protein uL16 of Gemmatimonas aurantiaca (strain DSM 14586 / JCM 11422 / NBRC 100505 / T-27).